A 220-amino-acid polypeptide reads, in one-letter code: MLQLAGVSNSTCGGVRNVSVETRNVKPQGKDSKAEENGSHSFMHSMDPQLERQMETTQNLVDSYMAIVNKTVWDLMVGAKPKTTMHIMIYNVHAPPHGDQGVHLLGAAVQPALAWEREDTHGGVGRVGTAARRDAASQSCCPTCTRLGTRRHSWRSRQSRHSGATRLAWEEIDTPGGVGRAGTAARRDSRGNEKTLLEESAEQADQGVHLLGAAVQPALA.

The tract at residues 18-46 (VSVETRNVKPQGKDSKAEENGSHSFMHSM) is disordered. The segment covering 28–38 (QGKDSKAEENG) has biased composition (basic and acidic residues). The GED domain maps to 54–149 (METTQNLVDS…CCPTCTRLGT (96 aa)). Residues 173–194 (DTPGGVGRAGTAARRDSRGNEK) are disordered. The segment covering 185-194 (ARRDSRGNEK) has biased composition (basic and acidic residues).

This chain is Putative GED domain-containing protein DNM1P46 (DNM1P46), found in Homo sapiens (Human).